The following is a 657-amino-acid chain: Hemocyanin A chain (657 aa).

Cys-93 and Cys-98 form a disulfide bridge. An N-linked (GlcNAc...) asparagine glycan is attached at Asn-167. Cu cation-binding residues include His-194, His-198, His-224, His-344, His-348, and His-384. 2 disulfides stabilise this stretch: Cys-483–Cys-502 and Cys-562–Cys-609. A disordered region spans residues 594–616 (EGHNGGHDYGGTHAQCGVHGEAY).

This sequence belongs to the tyrosinase family. Hemocyanin subfamily. As to quaternary structure, hexamer of a number of different chains, of which A, B, and C have been identified. Hemolymph.

Its subcellular location is the secreted. It is found in the extracellular space. In terms of biological role, hemocyanins are copper-containing oxygen carriers occurring freely dissolved in the hemolymph of many mollusks and arthropods. The chain is Hemocyanin A chain from Panulirus interruptus (California spiny lobster).